Consider the following 523-residue polypeptide: GMP synthase [glutamine-hydrolyzing] (523 aa).

The Glutamine amidotransferase type-1 domain maps to 18–208 (KILIVDFGGQ…LYNVCGAKGD (191 aa)). Catalysis depends on cysteine 95, which acts as the Nucleophile. Residues histidine 182 and glutamate 184 contribute to the active site. Residues 209–398 (WNMKSFLAEA…LGLPDYLVHR (190 aa)) enclose the GMPS ATP-PPase domain. 236-242 (SGGVDSS) is a binding site for ATP.

In terms of assembly, homodimer.

It catalyses the reaction XMP + L-glutamine + ATP + H2O = GMP + L-glutamate + AMP + diphosphate + 2 H(+). It participates in purine metabolism; GMP biosynthesis; GMP from XMP (L-Gln route): step 1/1. In terms of biological role, catalyzes the synthesis of GMP from XMP. This Treponema denticola (strain ATCC 35405 / DSM 14222 / CIP 103919 / JCM 8153 / KCTC 15104) protein is GMP synthase [glutamine-hydrolyzing].